The chain runs to 152 residues: Spermine/spermidine N(1)-acetyltransferase (152 aa).

The N-acetyltransferase domain maps to 3–152 (INIKAVTDDN…NGEKVMVKEL (150 aa)). Acetyl-CoA contacts are provided by residues 82-84 (FFI), 89-95 (QGKGLGK), and 122-131 (NIHAIRLYQR). Tyrosine 129 acts as the Proton donor in catalysis.

The protein belongs to the acetyltransferase family.

It carries out the reaction an alkane-alpha,omega-diamine + acetyl-CoA = an N-acetylalkane-alpha,omega-diamine + CoA + H(+). It catalyses the reaction spermine + acetyl-CoA = N(1)-acetylspermine + CoA + H(+). The catalysed reaction is spermidine + acetyl-CoA = N(1)-acetylspermidine + CoA + H(+). Its pathway is amine and polyamine degradation; spermine degradation. The protein operates within amine and polyamine degradation; spermidine degradation. Its activity is regulated as follows. Putrescine and N(8)-acetylspermidine are competitive inhibitors of spermidine acetylation. Its function is as follows. Acetylates both spermidine and spermine at primary propyl amine moieties, with spermine being the preferred substrate. This is Spermine/spermidine N(1)-acetyltransferase (bltD) from Bacillus subtilis (strain 168).